A 6733-amino-acid polypeptide reads, in one-letter code: MSKTSRELTNETELHLCSSTLDLISKSQLLAQCLGTPQNLVSLSKMVPSILESPTLEPRYTSTHSSSLQSLQLLALNTSSTLYKWTTGSISKLRGHLERELCRGLVPLNDFIPKGNYVELSLMIPSVLTGQGTSTTTTLQEMCSDMVQSCIKSMETDLLKGVLALKDQTSCQEYFLSANYQSLIPPQPLVNAMRMSSVVDLSPLILENTRLLLKLSPFHGGTSVSYTSMIREFVDCSRRDEKCLKRRLTKKQKRQEEGSFDANKVITLGGKMYRYRVVILKCSDEVDDLIGFDGKVGEFDYNFENVPHCWRDLVKRRCLIRAKATWNLAGGVDENLDHVYIDESQXDFRCADGSSDSPSACVEDPHLEERIFSRVWLKQTSRFFGTKIQQVSELFKSIGLPELETTYCGVNPVKVGNKWLSFRDQGRSRVFFVYTDSNVYLATTRQKVCCDYILTKFKSVKWIGNKPDQCRVVKVLAWLISVNKVKNCTRVITPMLTVQGKISHRRVDYLDISVLDSYVSDTAGLNCVQKVKKFLSMYYNCGADLGLLDNFLTPIECGTKQLVFERCNCPNHQFYVAQFDNHVVLGLGRPTGVVYPEEIPSCANIYAVGFATQKRVVEVHYYSEMDRHQLPQDYYYFAYDQEFQHVGGDDYVNHHLDDVEDQPFPPVLFDDVYDSGDSLDDGGSDLDCFDVGYDFFWPEAPIPVPSPYGYYQGQRLRDLCVAGGDFGCDCPRCDGTFIYHPFRPRHYHSFDEVGPFIQMCEFTLTYSGQNYNLFYGLEPKVCLQDLVEASDKLLQLLVRGQLENISLPNDILACLSSLKLGANIHPFLWPAPFFNANGEWVDIFGGGDFTVFGEDFCLKAKSMVESVYFLVENFFSVDCPIGNLYCNLHLDGDVKKMLWSTIHMKYIYLALIHSEKVFNIILNSRQLSHQELVKLVIIGTFDVSIVAPCACSGDCNHGKVYNWTNLLSSVYRFVTLDQLVGLSYCEKRSLVLRKVQQYLEVEEGYQRPVQLLMAPFYGFNDNAEPDEQPLTGVFHQQVMQMFDTCVMLDVICGLKRPRASVYNLFGVLADYFRRPFTFRYYQVAEFSGSESTQVFTDVTSALTSKDPCSNRPYIYHDYAVCRVVEPRTAAVTTRGAIYPPEVIEMIRSYLPIEFDVGVMNYVDGNCDFKYCNLEFCLSGRGLVKLDTGELLDYKTNLFVVRYKTLPLLYVTSNPIYLSDFSLDNAVCLTGDFKLSFDVEPGSTLFGLYFTNGRCYRDVWETLPRFGLGTLSPPKCHSKCEPFENLAEVFFFKRRVQLVPLVNNYTPVFRHRPDIPKVLTVELMPYYSSIGYQGFVAPKCVLPGCVATQYCKLRHQLDRCVQVTKLAVAYAFYFKPLNIGSLYHLDPMRGTSYGKPAVVQFEPVGLIKEVNILVYQFGKHVAIHYFPECPTYVAYGHYPSHSVGVWLGYLPSVEECVIAQRNYRVYVPTCFRLSRTGCYHIQQDEDFERTHITVSYHYARDFDTKSLTPMFQMFSKIFGKSKQDLICALNSLSEESQSVLTLFCEEFDSAYTLQTISDEVSFETSTSPELVACVLAYAIGYELCLTVKTDGECESLDVGSSLEQVYVDYDVSKNVWDLSTHLQDDSSDDLELPFNQYYEFKVGRASVVLVQDDFKSVYDFLKSEQGVDYVVNPANNQLKHGGGIAKVISCMCGPKLTSWSNNYIKQYKKLGVTCAIRSPGFQLGKGVQIIHVVGPKSADSDVVNKLEASWRSVFQNVKPDTTVLTSMLSTGIFGCSVTDSATTLLSNLVDLDKDVVVFVVTNVSDQYIEALGVVESFQSAHGLPNFGNTCWFNALYQLLKSFAVKEQIVQDLVNCFDDFYECPTRQCVEWVCDQLGVVFGEQYDAVEMLVKIFDVFKCNVRVGYDCLARLQQVALGSCREVPADAVLMFFGQDKSGHWVAARKVCGVWYTFDDKVVVKKDPDWSKVVLVLRERGLFKATDFETPRPRRRRVAYRVPRDTISQDAIMFLEERQFSSGTMLAHSCVESVESFHVEGVQPSPLQSVDGLDDVADLSCDNHVCDNSDLQEPQVVVSQPSEVLTTSMSIECPVLENSECSVETDLNPVCEENEQVGESGIKEQDGVTTSDSQQVFSKSLDPIIKQHEVESVEPQDLPVFSQQPQVMLSMTWRDVLFQQYLGFKSDLLSLTHVNKFKIVVYLMVLWFVLLYCFSDFSLLSRFCLYVFLLWLSHVVLVVKKLDLGLVNSGGESYVLRILSSVKVPNCIAFNCDGVHWLILKLLFYSFHFYDFFVKTLVVVFQMPQLRCFTWPLLKLGFADTFLSHHILAFPTKQVSQSCLPVFGDERKYIYVPYWCKESFRTLVARAKQLTATGRTKTLDNWHYQCCSKTVKPSSCFNVRDFVFDDACNNHKHYGFFSALWFYVVFYSGFVSFWLPLMFCYCALFMCTFKNLPVNITRPIRWTVLQQVVDDLLSIITKPLFGRPACPPLSAYLTATTADEAVRASRSLLGRFCTPVGFQQPIMNVENGVAVSSLGFINPLMWPLFIVVLLDNRFVWFFNVLSYIMLPVFVIILFYFYLRKICGCVNVKGVVKNCTRHFQNFSKPLVAAGVHGNRTNFTYQPMQENWCDRHSWYCPKEEHYMTPEMAMFIKNYYNLATSPMADTIWCDYVKSVPNMTWANFKFSLFKSNETVMCGPSSHADSMLLSWYAFLHGIRFAVNPSVIDIPSQTQPIYVSSDSDDSLDKGCDVSLRPTKNKGKFKKQSVAYFSAGPVDLWYYVMLIIALGAIFVFMYSCFMVGQYVVMPRDKFFGVNPTGYSYVNAQPYLHASPPVLRNSDGMVLATPLKVPSISYSVYRLLSGHLYFTKLIVAENECTPPFGAXRLSHEFTCNDFTYILPAHLRIFGRYIMLIHPDQLHMLPFEVEHSTHTRLCYVTGTNIVECLPTFEIISPYVFVVLVAIFTIVFLFLLRMYIVMYSYFKVFTYVVFKLLFVNTVMVLFVVCLPPLVPGVVFVLALWLCDSVVFLLYLAVLSLFILPWFYVMLFVLIVGGFVFWWMMKSSDVVHLTPDGLTFNGTFEQVSKCVFPLNPLIVNRLLLDCRMSHSDLVEKSKLKTTEGKLATEMMKVFMTGETAYYQPSNFSFQSVFSKVVSPFTLHARPPMPMFRLYVYFNGQCVGTTCTGTGFAIDDSTIVTAKHLFECDDLKPTHLSVELSCRSYWCTWKEPNVLSWKFEGENAYISVENLRDFYGIDFKYLPFQQIECEFYKRMEAVTIYSIKYGSEFATQAWQTVNGHFVCCNTEGGDSGAPLVWRDSVIGVHQGLCDSFKTTLASDSKGVMMTEVKGYHVDPPVYYKPIIMSAAYNKFVADSDVSVGECTNYHNFVNEDFFSMHDELEKVSFGDKMFRYCQSLPRYLEPLHYFHVPSFWQPFKKQSVSSNVSWVVENLHFIFSVYFLVCDFVAYWWLDDPFSVVLPLFFVVQLLSTVVLKNVLFWNTSYLVTLAVTFYVHSEVAESMYLLGLFSDQIVNRVGLILVVSVMCLFVVVRVVVNVKRAIFVVVVSVLLIVVNVVLGVVQFNSLVAVCMFDIYAVFAALLTPQPVVAIMMLILFDTKCLMSFAFVVIVLSFRVFKNYKFVRVLHNLCNFDFVLTQLSLFRYRHHNQGNNPSHYEALWLFLKELYYGVQDVKYEVFSPQAGTYNVRFLTDMTEQDQLEAVEQVQRRLQRFSIVQDKNSQRLVLYSKNVDFLRSQIQHQRVLGANPFIITTLTPKDIAIDNVEVHNPSQFKPEDLQAHMWFYSKSPIFVGQVPIPTNVQTAAVLDTTYNCQDLTADEKNNVAANLQIQNAALTLSLFEECNRFLESELGDVPTLMWQSEDVVDVKQLEVQIEKLRVVLDGMQLGTSEYKATRKQINILQSQLDKALAFERKLAKFLEKVDQQQAITNETAKQLSAFKNLVKQVYESYMSSLKVRVVESNDASCLLTSTDLPRKLVLMRPITGLDNIKIVEKANGCEITAFGDTFTTGLGSNLAGLAYSSTQPLSAYPFIFNLEGIFKQQANIGYKTVECNMSSDNGSVLYKGKIVAVPSEDNPDFVVCGKGYKLDCGINVLMIPSIVRYITLNLTDHLQRQSLKPRRRLQYKQQGVRLGGVNLGEHQAFSNELISSVGYTTWVSSTVCTDKSHKHPWFVQIPSSEKDPEWFMHNTQVKNNQWVVDAKPTHWLVDADTNEQLFALALTDEEYLKAESILAKWSPITQDVECWFKDLRGYYTVSGLQPLWPVCPKKICSLKIVPIFQSQSVAYADEPTHFLSLPVVNKNFLEAFYELQEGFPGEKQVAPHISLTMLKLTEEDVAKVEDILDEMVLPNTYATITNPHMMGQYYVFEVEGLQALHDEVVSVLRQHGIACDQTRMWKPHLTIGEIKDGSVFNKFKDFGITCKLEDCDFVKLGAPKANARYEFIATLPVGDFKLLRDVWCACRHLCFQNGAYQSSRSKHYIDLATEYNAGIVKVNKSNTHSVEYKGQRFMIKRVKDQHEFALARTAFLPSIIPHHMVHQNGEWFLVRGPTTQWSLGDLVYAIWLGDQAYLDECGFVFNPSRDEFLDDANQRSYLANLLEPAILSFCEIFHCVKGCQVPYKITLDNLDLKGQLYDFGDYPCPNKVDNQSALFVLAEVWSMTRKPFPTKFAQVLAKEMNVPADFQMYFQHTLLSGKYFDKAMCLNNVRPLLRDPANLTTTPFFSQHSGVWTHFYNPIYGLVECDLEEFSNLPEVLQQLITVQGPITSAMTPAISIGEGVYAANVPPVAAAKQKIPLYDVGLCQELTDAGVDCGEAFKYFYYLSNPAGALADVCFYDYQGTGFYSPKLLAGVYDFMKRVTTCYKTDERFTYEQAKPRKSSMGINITGYQQDAVYRALGPENITKLFEYAQKAPLPFCTKIITKFALSAKARARTVSSCSFIASTIFRFAHKPVTSKMVEVAQNSQGFCLIGVSKYGLKFSKFLKDKYGAIEQFDVFGSDYTKCDRTFPLSFRALTAALLYELGGWEEDSWLYLNEVNSYMLDTMLCDGMLLNKPGGTSSGDATTAHSNTFYNYMVHYVVAFKTILSDLSDCNKVMRIAAHNAYTTGDYGVFNTLLEEQFQTNYFLNFLSDDSFIFSKPGALKIFTCENFSNKLQTILHTKVDLTKSWATTGHIEEFCSAHIIKTDGEYHFLPSRGRLLASLLILDKLSDVDIYYMRFVAILCESAVYSRYQPEFFNGLFQVFLDKVQQFRKDYCCDPCPTQLLDRQFYENLVFTSNTEVGLVDCYLENFKLQCEFKQQAGFDRVCFCCPNPAVSVCEECYVPLPLCAYCYYVHVVISSHCKIEDKFKCPCGQDDIRELFIVLNNSICIYQCRSCVESDRLRISLLSDVDQVVRLPGFKANSASIAKNGVAQLLTPVDNVDVSLDWNHQETVQQNVARIVYHSANMTQMSIEVVYVNFSLVRNDGSSAILDIPNFKCPDTSYCLFYKPGKTGVLKFTGKGTLTSCYDSNNLTWFKVTCPDFNQPWRLATCFVIQQHDAVYPPIKSTQYENVTFVMGPPGTGKTTFVYNTYLSKASPSNRFVYCAPTHRLVGDMDEKVDGAVVVSAYNDRTYRNPVWKKDDSYDVLLCTHNTLPFIKSAVLIVDEVSLIPPHVMIKILSMGFKKVVLLGDPFQLSPVYKNHKVHFKYDTFYLLQLATQKRYLTACYRCPPQILSAFSKPYCDVGVDLVSFNNKPGKFDIIVSKQLANMQDFSVLSVLSKEYPGYVILVNYRAAVDYAMQNGLGDVTTIDSSQGTTAANHLLVLFGASNFSKTINRVIVGCSRSTTHLVVVCCPELYKHFQPILNWPEPVYRYFGMEKQSDFNIIPEVASLVFCDIEFWHYKADPNSKTRTVYPGQIAVVTSQTLQLYLGVFDDAGYKSALRGLPKDVFVPPNWVWMRKHYPSFEQHAYNMQRLFKFIIDTTCGQPWFILYSCSNDLKSLKFYVEFGTNYFCSCGELAICLMRDGLYKCRNCYGNMSISKLVNCKYLDVQKERIKLQDAHDAICQQFHGDSHEALCDAVMTKCLYLASYDAAFKDTIHVKYKDLCLEIQYKITSPYVRYDGVNKRYLYRDHGAMHYFKTPKSPMQNVYRYEVGAHTEYSINICNSYEGCQSFGKTCTKCIHIHCIVEQFMADDRYRDFILVSVVKSDFVEQALSPAAKALMLTVTRVEGKSFYTSNGQRYDLYDYDLSKSVMRVVGASVKPLPLYSVVVGLGINCTVGCVLPNVPMKLKDELLSTDVPLSTLRLDLPTWYYVTWPTLSNRTSRWKLAGAQVYDCSVHIYVEATGEQPLYYLQLGNGESLRELPETLFSTGRLYNLEHDPSKNFNVQQLAIETIPKNHHVFAGDFTDVGTDIGGVHHVVALNGYKGSIIPNYVKPIATGLINVGRSVKRTTLVDVCANQLYEKVKQQIAGVKVSKVIFVNIDFQEVQFMVFAKGEDDIQTFYPQKEFIRSYYEWPTILPELESHYDLKNYGQDPQFMPQPVNFAKYTQICTFIQEHVKVARNSLIWHVGAAGIDGCSPGDIVLSSFFKECLVYSWDVKDYDTLLEKHNYDCNFRPNLIVSDVYNVSSNVSEVLEDCVHRLALGGTIIFKTTESSRPDIQLSKVTKYFAAVHFFTAGVNTSSSEVFVVLKYKLHSEPIGEELCSPNILRRIAAYRNKLCIVPNFKVFSTSLSYRFSSVKFVQKCFYVSVPRQFCASGLIQEVPLLCQMKH.

The region spanning 1633–1814 (FNQYYEFKVG…QYIEALGVVE (182 aa)) is the Macro domain. Positions 2183–2565 (LTHVNKFKIV…IMLPVFVIIL (383 aa)) are HD1. Transmembrane regions (helical) follow at residues 2191-2211 (IVVY…DFSL), 2219-2239 (VFLL…LGLV), 2266-2286 (GVHW…DFFV), 2411-2431 (ALWF…PLMF), 2521-2541 (VAVS…IVVL), 2546-2566 (FVWF…IILF), 2769-2789 (VMLI…FMVG), 2937-2957 (IISP…FLFL), 2986-3006 (VLFV…LALW), and 3022-3042 (LFIL…GFVF). An HD2 region spans residues 2769 to 3042 (VMLIIALGAI…FVLIVGGFVF (274 aa)). Catalysis depends on charge relay system; for 3C-like serine proteinase activity residues His-3184, Glu-3222, and Ser-3291. A run of 7 helical transmembrane segments spans residues 3422 to 3442 (SNVS…FLVC), 3456 to 3478 (VVLP…VLFW), 3486 to 3506 (LAVT…LGLF), 3514 to 3534 (VGLI…VVVN), 3538 to 3558 (AIFV…LGVV), 3573 to 3593 (AVFA…LILF), and 3598 to 3613 (LMSF…FRVF). Positions 3430 to 3613 (NLHFIFSVYF…VVIVLSFRVF (184 aa)) are HD3. The 232-residue stretch at 4442-4673 (DFKLLRDVWC…AKEMNVPADF (232 aa)) folds into the NiRAN domain. A RdRp catalytic domain is found at 4981-5132 (FDVFGSDYTK…FSKPGALKIF (152 aa)). A CV ZBD domain is found at 5289–5404 (FDRVCFCCPN…NGVAQLLTPV (116 aa)). 12 residues coordinate Zn(2+): Cys-5293, Cys-5296, Cys-5304, Cys-5307, Cys-5314, Cys-5317, His-5321, His-5327, Cys-5336, Cys-5338, Cys-5359, and Cys-5362. The (+)RNA virus helicase ATP-binding domain occupies 5509–5688 (NQPWRLATCF…LQLATQKRYL (180 aa)). The (+)RNA virus helicase C-terminal domain occupies 5689–5848 (TACYRCPPQI…FGMEKQSDFN (160 aa)). The ExoN domain occupies 5846-6059 (DFNIIPEVAS…YLASYDAAFK (214 aa)). Residues Asp-5860, Glu-5862, and Asp-5961 contribute to the active site. 3 residues coordinate Zn(2+): His-6025, Cys-6029, and His-6033. Catalysis depends on residues His-6037 and Asp-6042. Cys-6048 is a Zn(2+) binding site. The 141-residue stretch at 6327-6467 (LPETLFSTGR…GEDDIQTFYP (141 aa)) folds into the NendoU domain. Catalysis depends on residues His-6363, His-6380, Lys-6412, Lys-6509, Asp-6585, Lys-6613, and Glu-6647. The 265-residue stretch at 6469 to 6733 (KEFIRSYYEW…EVPLLCQMKH (265 aa)) folds into the Nidovirus-type SAM-dependent 2'-O-MTase domain.

In terms of processing, specific enzymatic cleavages in vivo by its own protease yield mature proteins. 3CL-PRO is autocatalytically processed.

Its subcellular location is the host membrane. The catalysed reaction is RNA(n) + a ribonucleoside 5'-triphosphate = RNA(n+1) + diphosphate. It carries out the reaction ATP + H2O = ADP + phosphate + H(+). Its function is as follows. The 3C-like serine proteinase is responsible for the majority of cleavages. Functionally, the helicase which contains a zinc finger structure displays RNA and DNA duplex-unwinding activities with 5' to 3' polarity. Acts on both ssRNA and dsRNA in a 3' to 5' direction. In terms of biological role, nendoU is a Mn(2+)-dependent, uridylate-specific enzyme, which leaves 2'-3'-cyclic phosphates 5' to the cleaved bond. In Bos taurus (Bovine), this protein is Replicase polyprotein 1ab (rep).